The sequence spans 447 residues: Clusterin (447 aa).

The signal sequence occupies residues 1–22; that stretch reads MKTLLLCVGLLLSWERGQVLGD. The Nuclear localization signal signature appears at 77-80; the sequence is KKNK. N85 and N102 each carry an N-linked (GlcNAc...) asparagine glycan. 5 disulfides stabilise this stretch: C101/C311, C112/C303, C115/C300, C120/C293, and C128/C283. A Phosphoserine modification is found at S132. N-linked (GlcNAc...) asparagine glycosylation is found at N144, N289, N326, N352, and N372. S394 bears the Phosphoserine mark. Residues 441 to 445 carry the Nuclear localization signal motif; that stretch reads RKKKR.

The protein belongs to the clusterin family. In terms of assembly, antiparallel disulfide-linked heterodimer of an alpha chain and a beta chain. Self-associates and forms higher oligomers. Interacts with a broad range of misfolded proteins, including APP, APOC2 and LYZ. Slightly acidic pH promotes interaction with misfolded proteins. Forms high-molecular weight oligomers upon interaction with misfolded proteins. Interacts with APOA1, LRP2, CLUAP1 and PON1. Interacts with the complement membrane attack complex. Interacts (via alpha chain) with XRCC6. Interacts with SYVN1, COMMD1, BTRC, CUL1 and with ubiquitin and SCF (SKP1-CUL1-F-box protein) E3 ubiquitin-protein ligase complexes. Interacts (via alpha chain) with BAX in stressed cells, where BAX undergoes a conformation change leading to association with the mitochondrial membrane. Does not interact with BAX in unstressed cells. Found in a complex with LTF, CLU, EPPIN and SEMG1. Interacts (immaturely glycosylated pre-secreted form) with HSPA5; this interaction promotes CLU stability and facilitates stress-induced CLU retrotranslocation from the secretory pathway to the mitochondria, thereby reducing stress-induced apoptosis by stabilizing mitochondrial membrane integrity. Interacts with BCL2L1; this interaction releases and activates BAX and promotes cell death. Interacts with TGFBR2 and ACVR1. Interacts (secreted form) with STMN3; this interaction may act as an important modulator during neuronal differentiation. Interacts with VLDLR and LRP8. Post-translationally, proteolytically cleaved on its way through the secretory system, probably within the Golgi lumen. Proteolytic cleavage is not necessary for its chaperone activity. All non-secreted forms are not proteolytically cleaved. Chaperone activity of uncleaved forms is dependent on a non-reducing environment. In terms of processing, polyubiquitinated, leading to proteasomal degradation. Under cellular stress, the intracellular level of cleaved form is reduced due to proteasomal degradation. Heavily N-glycosylated. About 30% of the protein mass is comprised of complex N-linked carbohydrate. Endoplasmic reticulum (ER) stress induces changes in glycosylation status and increases level of hypoglycosylated forms. Core carbohydrates are essential for chaperone activity. Non-secreted forms are hypoglycosylated or unglycosylated.

It is found in the secreted. It localises to the nucleus. The protein localises to the cytoplasm. The protein resides in the mitochondrion membrane. Its subcellular location is the cytosol. It is found in the microsome. It localises to the endoplasmic reticulum. The protein localises to the mitochondrion. The protein resides in the perinuclear region. Its subcellular location is the cytoplasmic vesicle. It is found in the secretory vesicle. It localises to the chromaffin granule. Functionally, functions as extracellular chaperone that prevents aggregation of non native proteins. Prevents stress-induced aggregation of blood plasma proteins. Inhibits formation of amyloid fibrils by APP, APOC2, B2M, CALCA, CSN3, SNCA and aggregation-prone LYZ variants (in vitro). Does not require ATP. Maintains partially unfolded proteins in a state appropriate for subsequent refolding by other chaperones, such as HSPA8/HSC70. Does not refold proteins by itself. Binding to cell surface receptors triggers internalization of the chaperone-client complex and subsequent lysosomal or proteasomal degradation. When secreted, protects cells against apoptosis and against cytolysis by complement: inhibits assembly of the complement membrane attack complex (MAC) by preventing polymerization of C9 pore component of the MAC complex. Intracellular forms interact with ubiquitin and SCF (SKP1-CUL1-F-box protein) E3 ubiquitin-protein ligase complexes and promote the ubiquitination and subsequent proteasomal degradation of target proteins. Promotes proteasomal degradation of COMMD1 and IKBKB. Modulates NF-kappa-B transcriptional activity. Following stress, promotes apoptosis. Inhibits apoptosis when associated with the mitochondrial membrane by interference with BAX-dependent release of cytochrome c into the cytoplasm. Plays a role in the regulation of cell proliferation. An intracellular form suppresses stress-induced apoptosis by stabilizing mitochondrial membrane integrity through interaction with HSPA5. Secreted form does not affect caspase or BAX-mediated intrinsic apoptosis and TNF-induced NF-kappa-B-activity. Secreted form act as an important modulator during neuronal differentiation through interaction with STMN3. Plays a role in the clearance of immune complexes that arise during cell injury. The sequence is that of Clusterin (CLU) from Oryctolagus cuniculus (Rabbit).